A 441-amino-acid chain; its full sequence is Ribosomal protein uS12 methylthiotransferase RimO (441 aa).

Residues 7-117 enclose the MTTase N-terminal domain; that stretch reads PKISFVSLGC…VLEAVHRASP (111 aa). Cys16, Cys52, Cys81, Cys148, Cys152, and Cys155 together coordinate [4Fe-4S] cluster. A Radical SAM core domain is found at 134–371; sequence LTPRHYAYLK…MARQQKISAR (238 aa). The TRAM domain maps to 374 to 440; sequence KRKVGTRQQI…EYDLHGTVAG (67 aa).

The protein belongs to the methylthiotransferase family. RimO subfamily. [4Fe-4S] cluster is required as a cofactor.

Its subcellular location is the cytoplasm. The catalysed reaction is L-aspartate(89)-[ribosomal protein uS12]-hydrogen + (sulfur carrier)-SH + AH2 + 2 S-adenosyl-L-methionine = 3-methylsulfanyl-L-aspartate(89)-[ribosomal protein uS12]-hydrogen + (sulfur carrier)-H + 5'-deoxyadenosine + L-methionine + A + S-adenosyl-L-homocysteine + 2 H(+). Catalyzes the methylthiolation of an aspartic acid residue of ribosomal protein uS12. This is Ribosomal protein uS12 methylthiotransferase RimO from Bradyrhizobium sp. (strain BTAi1 / ATCC BAA-1182).